Reading from the N-terminus, the 410-residue chain is Lissencephaly-1 homolog (410 aa).

Residues 7–39 (QRDELNRAIADYLRSNGYEEAYSVFKKEAELDV) form the LisH domain. A coiled-coil region spans residues 56–82 (TSVIRLQKKVMELESKLNEAKEEFTSG). WD repeat units lie at residues 106-147 (GHRS…RTLK), 148-187 (GHTD…CIRT), 190-229 (GHDH…CVKT), 232-271 (GHRE…CKAE), 274-333 (EHEH…CLMT), 336-377 (GHDN…KTLN), and 378-410 (AHEH…WECR).

It belongs to the WD repeat LIS1/nudF family. Can self-associate. Component of the cytosolic PAF-AH (I) heterotetrameric enzyme, which is composed of PAFAH1B1 (beta), PAFAH1B2 (alpha2) and PAFAH1B3 (alpha1) subunits. The catalytic activity of the enzyme resides in the alpha1 (PAFAH1B3) and alpha2 (PAFAH1B2) subunits, whereas the beta subunit (PAFAH1B1) has regulatory activity. Trimer formation is not essential for the catalytic activity. Interacts with dynein, dynactin, NDE1 and NDEL1.

It localises to the cytoplasm. It is found in the cytoskeleton. The protein localises to the microtubule organizing center. The protein resides in the centrosome. Its function is as follows. Regulatory subunit (beta subunit) of the cytosolic type I platelet-activating factor (PAF) acetylhydrolase (PAF-AH (I)), an enzyme that catalyzes the hydrolyze of the acetyl group at the sn-2 position of PAF and its analogs and participates in PAF inactivation. Regulates the PAF-AH (I) activity in a catalytic dimer composition-dependent manner. Positively regulates the activity of the minus-end directed microtubule motor protein dynein. May enhance dynein-mediated microtubule sliding by targeting dynein to the microtubule plus end. Required for several dynein- and microtubule-dependent processes such as the maintenance of Golgi integrity, the peripheral transport of microtubule fragments and the coupling of the nucleus and centrosome. May be required for proliferation of neuronal precursors and neuronal migration. The protein is Lissencephaly-1 homolog of Gallus gallus (Chicken).